A 469-amino-acid chain; its full sequence is MPNVLVISNRLPVTISREEDGTYKYTMSSGGLVTALSGLKQSTTFQWFGWPGLEIPEKDKPRLINDLETMFSCVPVFMDDDLADLHYNGFSNSILWPLFHYHPGEMNFDQVAWEAYTQANRLFAKKVASIVKPGDIVWVHDYHLMLLPEMLREECENNSALDGLKIGFFLHTPFPSSEIYRILPVRKEVLTGVLSCNLIGFHTYDYARHFLSSVSRILDLETMPNGTYYKGRHVVVGAFPIGIDVNKFLEGCKRPAVQERIAQLQDKFKGIKVVVGVDRLDYIKGVPQKLHAFEVFLSEHPEWIGKVVLVQVAVPSRGLVEEYQNLRAVVNELVGRINGMFGTVEFTPIHFMHRSVDFNELIALYSISDVCFVSSTRDGMNLVSYEYVACQTEKHGSLILSEFTGAAQSLNGALIVNPWNTEDMAEALYDSLTFSPEKKAENHRKLFKYVSKYTSQHWGEAFVSELKRC.

D-glucose 6-phosphate-binding residues include Y87 and D141. Positions 279 and 284 each coordinate UDP. The UDP-alpha-D-glucose site is built by R279 and K284. R317 contacts D-glucose 6-phosphate. 378–386 provides a ligand contact to UDP-alpha-D-glucose; sequence DGMNLVSYE. UDP is bound at residue 382-386; that stretch reads LVSYE.

It belongs to the glycosyltransferase 20 family.

The catalysed reaction is D-glucose 6-phosphate + UDP-alpha-D-glucose = alpha,alpha-trehalose 6-phosphate + UDP + H(+). It participates in carbohydrate biosynthesis. Functionally, synthase catalytic subunit of the trehalose synthase complex that catalyzes the production of trehalose from glucose-6-phosphate and UDP-alpha-D-glucose in a two step process. The disaccharide trehalose serves as a storage carbohydrate that is mobilized during spore germination. The chain is Alpha,alpha-trehalose-phosphate synthase [UDP-forming] from Yarrowia lipolytica (strain CLIB 122 / E 150) (Yeast).